A 58-amino-acid polypeptide reads, in one-letter code: Probable mRNA interferase HicA 2 (58 aa).

Belongs to the HicA mRNA interferase family. As to quaternary structure, probably forms a complex with the cognate antitoxin HicB 2 which inhibits the mRNA interferase activity.

Functionally, toxic component of a type II toxin-antitoxin (TA) system. A probable translation-independent mRNA interferase. The protein is Probable mRNA interferase HicA 2 (hicA2) of Photorhabdus laumondii subsp. laumondii (strain DSM 15139 / CIP 105565 / TT01) (Photorhabdus luminescens subsp. laumondii).